Consider the following 105-residue polypeptide: uncharacterized protein (105 aa).

The protein resides in the cytoplasm. It localises to the nucleus. This is an uncharacterized protein from Schizosaccharomyces pombe (strain 972 / ATCC 24843) (Fission yeast).